The following is a 179-amino-acid chain: Inner membrane-spanning protein YciB (179 aa).

The next 6 membrane-spanning stretches (helical) occupy residues 3–23 (FLFD…ADIY), 24–44 (TATA…WFRH), 49–69 (PMQW…LVLH), 76–96 (WKPT…VIGW), 121–141 (AAWA…AYQF), and 149–169 (FKLF…SVWL).

Belongs to the YciB family.

The protein resides in the cell inner membrane. Plays a role in cell envelope biogenesis, maintenance of cell envelope integrity and membrane homeostasis. This Cupriavidus necator (strain ATCC 17699 / DSM 428 / KCTC 22496 / NCIMB 10442 / H16 / Stanier 337) (Ralstonia eutropha) protein is Inner membrane-spanning protein YciB.